Consider the following 330-residue polypeptide: Aspartate--ammonia ligase (330 aa).

The protein belongs to the class-II aminoacyl-tRNA synthetase family. AsnA subfamily.

It is found in the cytoplasm. It carries out the reaction L-aspartate + NH4(+) + ATP = L-asparagine + AMP + diphosphate + H(+). Its pathway is amino-acid biosynthesis; L-asparagine biosynthesis; L-asparagine from L-aspartate (ammonia route): step 1/1. The sequence is that of Aspartate--ammonia ligase from Streptococcus thermophilus (strain ATCC BAA-250 / LMG 18311).